Consider the following 306-residue polypeptide: MIFQRTVKEMVKTTGVGLHSGNKVTLTIKPAPVNTGIKLVRTDLSPAVEIPAVADQVRETTMCTALVNDDGVRISTIEHLFAALAGLGIDNAVIEVDAPEIPIMDGSASPFVFLLQSVGIQEQSAAKKYIKITKPIRVEDGDKWAELKPFKGFRVDFAIDFNHPEIARSQQHMVMDFSSSAFIKDISRARTFGFMRDIEYLRANNLALGGSMENAVVLDEYRVLNPDGLRYEDEFVKHKILDAFGDLYVAGHAIVGEFCAFKTGHALNNQLVRAMLAQQDAWEIVSFEKEADAPVSFSVPAGAVFA.

Residues H79, H238, and D242 each coordinate Zn(2+). H265 functions as the Proton donor in the catalytic mechanism.

The protein belongs to the LpxC family. Zn(2+) is required as a cofactor.

It carries out the reaction a UDP-3-O-[(3R)-3-hydroxyacyl]-N-acetyl-alpha-D-glucosamine + H2O = a UDP-3-O-[(3R)-3-hydroxyacyl]-alpha-D-glucosamine + acetate. It participates in glycolipid biosynthesis; lipid IV(A) biosynthesis; lipid IV(A) from (3R)-3-hydroxytetradecanoyl-[acyl-carrier-protein] and UDP-N-acetyl-alpha-D-glucosamine: step 2/6. Functionally, catalyzes the hydrolysis of UDP-3-O-myristoyl-N-acetylglucosamine to form UDP-3-O-myristoylglucosamine and acetate, the committed step in lipid A biosynthesis. The polypeptide is UDP-3-O-acyl-N-acetylglucosamine deacetylase (Shewanella halifaxensis (strain HAW-EB4)).